Consider the following 212-residue polypeptide: Thymidylate kinase (212 aa).

Position 11–18 (11–18 (GPEGAGKT)) interacts with ATP.

The protein belongs to the thymidylate kinase family.

It carries out the reaction dTMP + ATP = dTDP + ADP. Phosphorylation of dTMP to form dTDP in both de novo and salvage pathways of dTTP synthesis. This chain is Thymidylate kinase, found in Streptococcus pneumoniae (strain P1031).